A 204-amino-acid chain; its full sequence is Somatotropin (204 aa).

The first 17 residues, 1 to 17, serve as a signal peptide directing secretion; it reads MNSVVLQLSVVCLGVSS. Gln-18 carries the post-translational modification Pyrrolidone carboxylic acid. His-36 is a binding site for Zn(2+). A disulfide bridge links Cys-69 with Cys-177. Residue Glu-186 participates in Zn(2+) binding. Cysteines 194 and 202 form a disulfide.

It belongs to the somatotropin/prolactin family.

The protein localises to the secreted. Its function is as follows. Growth hormone plays an important role in growth control and involved in the regulation of several anabolic processes. This chain is Somatotropin (gh), found in Oreochromis mossambicus (Mozambique tilapia).